Here is a 1132-residue protein sequence, read N- to C-terminus: Protein CROWDED NUCLEI 1 (1132 aa).

The disordered stretch occupies residues 1 to 31 (MSTPLKVWQRWSTPTKATNPDSNGSSHGTGL). The segment covering 10–28 (RWSTPTKATNPDSNGSSHG) has biased composition (polar residues). Residues 73–714 (LLIEKKEWSS…KKLKEQREQF (642 aa)) adopt a coiled-coil conformation. Short sequence motifs (nuclear localization signal) lie at residues 379-386 (EKREAEWK) and 693-700 (IRKDVDDL). A phosphoserine mark is found at S774 and S803. Over residues 849 to 859 (AESETGTKEVE) the composition is skewed to basic and acidic residues. 4 disordered regions span residues 849 to 871 (AESE…DQSD), 883 to 909 (SLSN…TRSV), 924 to 1039 (INLY…VQQE), and 1061 to 1132 (GVST…FLTT). A compositionally biased stretch (polar residues) spans 861–871 (TNVNSDGDQSD). A phosphoserine mark is found at S865 and S883. Basic residues predominate over residues 895 to 907 (MKGKGKARTRRTR). S908 is subject to Phosphoserine. Phosphoserine is present on residues S1093, S1105, and S1112. A compositionally biased stretch (basic and acidic residues) spans 1095 to 1105 (DVNKTPLRADS).

Belongs to the CRWN family. Core component of the LINC complex which is composed of inner nuclear membrane SUN domain-containing proteins coupled to outer nuclear membrane WIP and WIT proteins. The LINC complex also involves nucleoskeletal proteins CRWN/LINC and possibly KAKU4 and the cytoskeletal myosin KAKU1. Interacts with SUN1 and SUN2. Binds to KAKU4. As to expression, expressed at low levels in roots, leaves, flowers and flower stalks.

It is found in the nucleus membrane. The protein resides in the nucleus. It localises to the nucleoplasm. The protein localises to the nucleus lamina. In terms of biological role, component of SUN-protein-containing multivariate complexes also called LINC complexes which link the nucleoskeleton and cytoskeleton by providing versatile outer nuclear membrane attachment sites for cytoskeletal filaments. Required for nucleus structure organization (e.g. size and shape). In Arabidopsis thaliana (Mouse-ear cress), this protein is Protein CROWDED NUCLEI 1.